The following is a 320-amino-acid chain: MQTRNTFSSIKEEITRSISVSLMIYIITWAPVSNAYPIFAQQGYENPREATGRIVCANCHLANKPVDIEVPQAVLPDTVFEAVVRIPYDMQLKQVLANGKKGGLNVGAVLILPEGFELAPPDRISPEIKEKMGNLSFQSYRPTKKNILVIGPVPGQKYSEITFPILSPDPATKKDVHFLKYPIYVGGNRGRGQIYPDGSKSNNNVYNATAAGIVSKIIRKEKGGYEITIVDAANGRQVVDIIPPGPELLVSEGESIKLDQPLTSNPNVGGFGQGDAEIVLQDPLRVQGLLFFFASVILAQIFLVLKKKQFEKVQLSEMNF.

The signal sequence occupies residues 1–35 (MQTRNTFSSIKEEITRSISVSLMIYIITWAPVSNA). Residues Tyr36, Cys56, Cys59, and His60 each coordinate heme. Residues 286–306 (VQGLLFFFASVILAQIFLVLK) form a helical membrane-spanning segment.

This sequence belongs to the cytochrome f family. The 4 large subunits of the cytochrome b6-f complex are cytochrome b6, subunit IV (17 kDa polypeptide, petD), cytochrome f and the Rieske protein, while the 4 small subunits are PetG, PetL, PetM and PetN. The complex functions as a dimer. It depends on heme as a cofactor.

Its subcellular location is the plastid. The protein resides in the chloroplast thylakoid membrane. In terms of biological role, component of the cytochrome b6-f complex, which mediates electron transfer between photosystem II (PSII) and photosystem I (PSI), cyclic electron flow around PSI, and state transitions. This chain is Cytochrome f, found in Cucumis sativus (Cucumber).